A 510-amino-acid polypeptide reads, in one-letter code: NAD(P)H-quinone oxidoreductase subunit 2 A, chloroplastic (510 aa).

The next 13 membrane-spanning stretches (helical) occupy residues Leu-24 to Leu-44, Ile-57 to Phe-77, Ile-99 to Ile-119, Met-124 to Cys-144, Leu-149 to Tyr-169, Tyr-183 to Gly-203, Pro-227 to Ala-247, Trp-295 to Ile-315, Met-323 to Asp-343, Tyr-354 to Leu-374, Ala-395 to Phe-415, Leu-418 to Leu-438, and Met-484 to Ile-504.

It belongs to the complex I subunit 2 family. NDH is composed of at least 16 different subunits, 5 of which are encoded in the nucleus.

The protein localises to the plastid. It localises to the chloroplast thylakoid membrane. It catalyses the reaction a plastoquinone + NADH + (n+1) H(+)(in) = a plastoquinol + NAD(+) + n H(+)(out). The catalysed reaction is a plastoquinone + NADPH + (n+1) H(+)(in) = a plastoquinol + NADP(+) + n H(+)(out). Its function is as follows. NDH shuttles electrons from NAD(P)H:plastoquinone, via FMN and iron-sulfur (Fe-S) centers, to quinones in the photosynthetic chain and possibly in a chloroplast respiratory chain. The immediate electron acceptor for the enzyme in this species is believed to be plastoquinone. Couples the redox reaction to proton translocation, and thus conserves the redox energy in a proton gradient. This chain is NAD(P)H-quinone oxidoreductase subunit 2 A, chloroplastic, found in Panax ginseng (Korean ginseng).